The chain runs to 308 residues: B3 domain-containing protein REM23 (308 aa).

Positions 19–114 (FFKVLKRSDM…SFTVKIFNKD (96 aa)) form a DNA-binding region, TF-B3 1. The disordered stretch occupies residues 117 to 198 (EMMQPPQSRA…TERTQNSKRT (82 aa)). A compositionally biased stretch (polar residues) spans 121–133 (PPQSRASFASSSR). Residues 134-145 (VKTEQDVKREEE) show a composition bias toward basic and acidic residues. Residues 149 to 166 (SSDSRSRGPTTAAETNRG) show a composition bias toward polar residues. Over residues 168-177 (SYKRKLNFGK) the composition is skewed to basic residues. Residues 178–198 (KKAEETQTYKRTERTQNSKRT) are compositionally biased toward basic and acidic residues. Residues 216–308 (VAGFKIFISK…LELLLVVSKP (93 aa)) constitute a DNA-binding region (TF-B3 2).

It is found in the nucleus. The chain is B3 domain-containing protein REM23 (REM23) from Arabidopsis thaliana (Mouse-ear cress).